The sequence spans 361 residues: Peptide chain release factor 1 (361 aa).

Gln236 carries the N5-methylglutamine modification.

Belongs to the prokaryotic/mitochondrial release factor family. Methylated by PrmC. Methylation increases the termination efficiency of RF1.

It is found in the cytoplasm. Functionally, peptide chain release factor 1 directs the termination of translation in response to the peptide chain termination codons UAG and UAA. The chain is Peptide chain release factor 1 from Lactobacillus delbrueckii subsp. bulgaricus (strain ATCC 11842 / DSM 20081 / BCRC 10696 / JCM 1002 / NBRC 13953 / NCIMB 11778 / NCTC 12712 / WDCM 00102 / Lb 14).